The following is a 193-amino-acid chain: dITP/XTP pyrophosphatase (193 aa).

7–12 (SENENK) lines the substrate pocket. D65 functions as the Proton acceptor in the catalytic mechanism. D65 contacts Mg(2+). Substrate-binding positions include S66, 144-147 (FGYD), K167, and 172-173 (HR).

This sequence belongs to the HAM1 NTPase family. As to quaternary structure, homodimer. Requires Mg(2+) as cofactor.

It carries out the reaction XTP + H2O = XMP + diphosphate + H(+). It catalyses the reaction dITP + H2O = dIMP + diphosphate + H(+). The catalysed reaction is ITP + H2O = IMP + diphosphate + H(+). Pyrophosphatase that catalyzes the hydrolysis of nucleoside triphosphates to their monophosphate derivatives, with a high preference for the non-canonical purine nucleotides XTP (xanthosine triphosphate), dITP (deoxyinosine triphosphate) and ITP. Seems to function as a house-cleaning enzyme that removes non-canonical purine nucleotides from the nucleotide pool, thus preventing their incorporation into DNA/RNA and avoiding chromosomal lesions. The protein is dITP/XTP pyrophosphatase of Tropheryma whipplei (strain Twist) (Whipple's bacillus).